A 227-amino-acid chain; its full sequence is Cytochrome c oxidase subunit 2 (227 aa).

Residues 1 to 14 (MAYPMQLGLQDATS) lie on the Mitochondrial intermembrane side of the membrane. The chain crosses the membrane as a helical span at residues 15–45 (PIMEELTDFHDHTLMIVFLISTLVLYIISLM). At 46 to 59 (LTTKLTHTNTMDAQ) the chain is on the mitochondrial matrix side. A helical membrane pass occupies residues 60–87 (EVETVWTILPAIILIMIALPSLRILYMM). Over 88–227 (DEINDPYLTV…QFESWTSSMT (140 aa)) the chain is Mitochondrial intermembrane. Cu cation-binding residues include His161, Cys196, Glu198, Cys200, His204, and Met207. Glu198 contributes to the Mg(2+) binding site.

This sequence belongs to the cytochrome c oxidase subunit 2 family. In terms of assembly, component of the cytochrome c oxidase (complex IV, CIV), a multisubunit enzyme composed of 14 subunits. The complex is composed of a catalytic core of 3 subunits MT-CO1, MT-CO2 and MT-CO3, encoded in the mitochondrial DNA, and 11 supernumerary subunits COX4I, COX5A, COX5B, COX6A, COX6B, COX6C, COX7A, COX7B, COX7C, COX8 and NDUFA4, which are encoded in the nuclear genome. The complex exists as a monomer or a dimer and forms supercomplexes (SCs) in the inner mitochondrial membrane with NADH-ubiquinone oxidoreductase (complex I, CI) and ubiquinol-cytochrome c oxidoreductase (cytochrome b-c1 complex, complex III, CIII), resulting in different assemblies (supercomplex SCI(1)III(2)IV(1) and megacomplex MCI(2)III(2)IV(2)). Found in a complex with TMEM177, COA6, COX18, COX20, SCO1 and SCO2. Interacts with TMEM177 in a COX20-dependent manner. Interacts with COX20. Interacts with COX16. It depends on Cu cation as a cofactor.

The protein localises to the mitochondrion inner membrane. It catalyses the reaction 4 Fe(II)-[cytochrome c] + O2 + 8 H(+)(in) = 4 Fe(III)-[cytochrome c] + 2 H2O + 4 H(+)(out). Functionally, component of the cytochrome c oxidase, the last enzyme in the mitochondrial electron transport chain which drives oxidative phosphorylation. The respiratory chain contains 3 multisubunit complexes succinate dehydrogenase (complex II, CII), ubiquinol-cytochrome c oxidoreductase (cytochrome b-c1 complex, complex III, CIII) and cytochrome c oxidase (complex IV, CIV), that cooperate to transfer electrons derived from NADH and succinate to molecular oxygen, creating an electrochemical gradient over the inner membrane that drives transmembrane transport and the ATP synthase. Cytochrome c oxidase is the component of the respiratory chain that catalyzes the reduction of oxygen to water. Electrons originating from reduced cytochrome c in the intermembrane space (IMS) are transferred via the dinuclear copper A center (CU(A)) of subunit 2 and heme A of subunit 1 to the active site in subunit 1, a binuclear center (BNC) formed by heme A3 and copper B (CU(B)). The BNC reduces molecular oxygen to 2 water molecules using 4 electrons from cytochrome c in the IMS and 4 protons from the mitochondrial matrix. The polypeptide is Cytochrome c oxidase subunit 2 (MT-CO2) (Cratogeomys castanops (Yellow-faced pocket gopher)).